An 898-amino-acid chain; its full sequence is DNA gyrase subunit A (898 aa).

Disordered stretches follow at residues 1–22 and 36–56; these read MSDD…DDDS and EEEK…EKEG. In terms of domain architecture, Topo IIA-type catalytic spans 97 to 562; it reads LPDARDGLKP…VMSSINNEDL (466 aa). Catalysis depends on tyrosine 185, which acts as the O-(5'-phospho-DNA)-tyrosine intermediate. The GyrA-box signature appears at 589–595; that stretch reads QRRGGVG.

It belongs to the type II topoisomerase GyrA/ParC subunit family. Heterotetramer, composed of two GyrA and two GyrB chains. In the heterotetramer, GyrA contains the active site tyrosine that forms a transient covalent intermediate with DNA, while GyrB binds cofactors and catalyzes ATP hydrolysis.

It localises to the cytoplasm. The catalysed reaction is ATP-dependent breakage, passage and rejoining of double-stranded DNA.. A type II topoisomerase that negatively supercoils closed circular double-stranded (ds) DNA in an ATP-dependent manner to modulate DNA topology and maintain chromosomes in an underwound state. Negative supercoiling favors strand separation, and DNA replication, transcription, recombination and repair, all of which involve strand separation. Also able to catalyze the interconversion of other topological isomers of dsDNA rings, including catenanes and knotted rings. Type II topoisomerases break and join 2 DNA strands simultaneously in an ATP-dependent manner. The polypeptide is DNA gyrase subunit A (Metamycoplasma arthritidis (strain 158L3-1) (Mycoplasma arthritidis)).